Reading from the N-terminus, the 525-residue chain is Asparagine synthetase domain-containing protein YML096W (525 aa).

The For GATase activity role is filled by C2. The Glutamine amidotransferase type-2 domain maps to 2–209 (CGILLHYCPN…LNSNQRSHLP (208 aa)). An Asparagine synthetase domain is found at 210 to 523 (YEVTSEIDLN…GTDLLKENRN (314 aa)). Residues 503–525 (SAKMTKDGNKHGTDLLKENRNCS) form a disordered region. Basic and acidic residues predominate over residues 506 to 525 (MTKDGNKHGTDLLKENRNCS).

The protein resides in the cytoplasm. The chain is Asparagine synthetase domain-containing protein YML096W from Saccharomyces cerevisiae (strain ATCC 204508 / S288c) (Baker's yeast).